A 520-amino-acid polypeptide reads, in one-letter code: FAD-linked oxidoreductase OXR2 (520 aa).

Residues M1–A23 form the signal peptide. N-linked (GlcNAc...) asparagine glycosylation is found at N77, N220, N378, and N390. An FAD-binding PCMH-type domain is found at S79–R251.

The protein belongs to the oxygen-dependent FAD-linked oxidoreductase family. FAD serves as cofactor.

Its pathway is polyketide biosynthesis. Functionally, FAD-linked oxidoreductase; part of the gene cluster that mediates the biosynthesis of pyriculol and pyriculariol, two heptaketides that induce lesion formation upon application on rice leaves but are dispensable for pathogenicity. The highly reducing polyketide synthase synthesizes the heptaketide backbone of pyriculol and pyriculariol. Pyriculol and pyriculariol contain several hydroxyl moieties and double bonds, so it can be assumed that several reduction steps occur during biosynthesis. These reactions could be executed by PKS19 itself or partly by the tailoring enzymes OXR1, OXR2, RED1, RED2 or RED3, identified within the cluster. The FAD-linked oxidoreductase OXR1 is the only tailoring enzyme for which the function has been determined yet, and is involved in the oxidation of dihydropyriculol and dihydropyriculariol into pyriculol and pyriculariol, respectively. This is FAD-linked oxidoreductase OXR2 from Pyricularia oryzae (strain 70-15 / ATCC MYA-4617 / FGSC 8958) (Rice blast fungus).